The primary structure comprises 639 residues: Testicular spindle-associated protein SHCBP1L (639 aa).

Disordered stretches follow at residues 1–25 and 48–75; these read MESD…EQTV and VASP…ETCD. The residue at position 3 (S3) is an O-acetylserine. 3 positions are modified to phosphoserine: S8, S19, and S50. Residues 54-63 are compositionally biased toward basic residues; sequence VKGKAARRRL. Positions 285-312 form a coiled coil; it reads IAQRFKKTLEKYKNKRVELIEYQSNIKE. PbH1 repeat units follow at residues 479 to 500, 501 to 523, 524 to 557, and 560 to 582; these read SGHL…CVLT, GASL…ELYP, GSIA…NMKV, and APKL…SILQ. Residue K556 is modified to N6-acetyllysine. K631 is subject to N6-acetyllysine.

In terms of assembly, interacts with HSPA2; this interaction may promote the recruitment of HSPA2 to the spindle. In terms of tissue distribution, expressed in pachytene spermatocytes and elongating spermatids inside the seminiferous tubules. Not detected in ovary (at protein level). Testis-specific.

It is found in the cytoplasm. The protein localises to the cytoskeleton. The protein resides in the spindle. Functionally, testis-specific spindle-associated factor that plays a role in spermatogenesis. In association with HSPA2, participates in the maintenance of spindle integrity during meiosis in male germ cells. The polypeptide is Testicular spindle-associated protein SHCBP1L (Mus musculus (Mouse)).